The sequence spans 1812 residues: MAVDSAMELLFLDTFKHPSAEQSSHIDVVRFPCVVYINEVRVIPPGVRAHSSLPDNRAYGETSPHTFQLDLFFNNVSKPSAPVFDRLGSLEYDENTSIIFRPNSKVNTDGLVLRGWYNCLTLAIYGSVDRVISHDRDSPPPPPPPPPPPQPQPSLKRNPKHADGEKEDQFNGSPPRPQPRGPRTPPGPPPPDDDEDDPVPLPVSGDKEEDAPHREDYFEPISPDRNSVPQEGQYSDEGEVEEEQQEEGEEDEDDVDVEEEEDEDEDDRRTVDSIPEEEEEDEEEEGEEDEEGEGDDGYEQISSDEDGIADLERETFKYPNFDVEYTAEDLASVPPMTYDPYDRELVPLLYFSCPYKTTFEIEISRMKDQGPDKENSGAIEASVKLTELLDLYREDRGAKWVTALEEIPSLIIKGLSYLQLKNTKQDSLGQLVDWTMQALNLQVALRQPIALNVRQLKAGTKLVSSLAECGAQGVTGLLQAGVISGLFELLFADHVSSSLKLNAFKALDSVISMTEGMEAFLRGRQNEKSGYQKLLELILLDQTVRVVTAGSAILQKCHFYEVLSEIKRLGDHLAEKTSSLPNHSEPDHDTDAGLERTNPEYENEVEASMDMDLLESSNISEGEIERLINLLEEVFHLMETAPHTMIQQPVKSFPTMARITGPPERDDPYPVLFRYLHSHHFLELVTLLLSIPVTSAHPGVLQATKDVLKFLAQSQKGLLFFMSEYEATNLLIRALCHFYDQDEEEGLQSDGVIDDAFALWLQDSTQTLQCITELFSHFQRCTASEETDHSDLLGTLHNLYLITFNPVGRSAVGHVFSLEKNLQSLITLMEYYSKEALGDSKSKKSVAYNYACILILVVVQSSSDVQMLEQHAASLLKLCKADENNAKLQELGKWLEPLKNLRFEINCIPNLIEYVKQNIDNLMTPEGVGLTTALRVLCNVACPPPPVEGQQKDLKWNLAVIQLFSAEGMDTFIRVLQKLNSILTQPWRLHVNMGTTLHRVTTISMARCTLTLLKTMLTELLRGGSFEFKDMRVPSALVTLHMLLCSIPLSGRLDSDEQKIQNDIIDILLTFTQGVNEKLTISEETLANNTWSLMLKEVLSSILKVPEGFFSGLILLSELLPLPLPMQTTQVIEPHDISVALNTRKLWSMHLHVQAKLLQEIVRSFSGTTCQPIQHMLRRICVQLCDLASPTALLIMRTVLDLIVEDLQSTSEDKEKQYTSQTTRLLALLDALASHKACKLAILHLINGTIKGDERYAEIFQDLLALVRSPGDSVIRQQCVEYVTSILQSLCDQDIALILPSSSEGSISELEQLSNSLPNKELMTSICDCLLATLANSESSYNCLLTCVRTMMFLAEHDYGLFHLKSSLRKNSSALHSLLKRVVSTFSKDTGELASSFLEFMRQILNSDTIGCCGDDNGLMEVEGAHTSRTMSINAAELKQLLQSKEESPENLFLELEKLVLEHSKDDDNLDSLLDSVVGLKQMLESSGDPLPLSDQDVEPVLSAPESLQNLFNNRTAYVLADVMDDQLKSMWFTPFQAEEIDTDLDLVKVDLIELSEKCCSDFDLHSELERSFLSEPSSPGRTKTTKGFKLGKHKHETFITSSGKSEYIEPAKRAHVVPPPRGRGRGGFGQGIRPHDIFRQRKQNTSRPPSMHVDDFVAAESKEVVPQDGIPPPKRPLKVSQKISSRGGFSGNRGGRGAFHSQNRFFTPPASKGNYSRREGTRGSSWSAQNTPRGNYNESRGGQSNFNRGPLPPLRPLSSTGYRPSPRDRASRGRGGLGPSWASANSGSGGSRGKFVSGGSGRGRHVRSFTR.

Ala2 is modified (N-acetylalanine). Disordered regions lie at residues Ile132–Ser302 and Lys576–Arg596. Phosphoserine occurs at positions 133 and 138. A compositionally biased stretch (pro residues) spans Pro139 to Gln152. Positions Lys160 to Gln169 are enriched in basic and acidic residues. The residue at position 173 (Ser173) is a Phosphoserine. Pro residues predominate over residues Pro174–Pro190. Residue Thr184 is modified to Phosphothreonine. Residue Ser222 is modified to Phosphoserine. The segment covering Asp224–Gln233 has biased composition (polar residues). Acidic residues-rich tracts occupy residues Tyr234–Asp266 and Ile274–Ser302. Over residues Ser584–Arg596 the composition is skewed to basic and acidic residues. Residue Tyr914 is modified to Phosphotyrosine. Ser1579 carries the phosphoserine modification. Disordered regions lie at residues His1616–Pro1635 and Lys1663–Arg1812. The segment covering Gly1689 to Gly1698 has biased composition (gly residues). Thr1708 is modified (phosphothreonine). Arg1723 carries the post-translational modification Omega-N-methylarginine. Residues Arg1723–Asn1748 show a composition bias toward polar residues. Arg1741 bears the Asymmetric dimethylarginine; alternate mark. Omega-N-methylarginine; alternate is present on Arg1741. Asymmetric dimethylarginine is present on residues Arg1773, Arg1775, and Arg1793. A compositionally biased stretch (gly residues) spans Gly1788–Gly1802. Residues Arg1803–Arg1812 are compositionally biased toward basic residues.

The protein belongs to the vir family. In terms of assembly, component of the WMM complex, a N6-methyltransferase complex composed of a catalytic subcomplex, named MAC, and of an associated subcomplex, named MACOM. The MAC subcomplex is composed of METTL3 and METTL14. The MACOM subcomplex is composed of WTAP, ZC3H13, CBLL1/HAKAI, VIRMA, and, in some cases of RBM15 (RBM15 or RBM15B). Interacts with WTAP. Also a component of a MACOM-like complex, named WTAP complex, composed of WTAP, ZC3H13, CBLL1, VIRMA, RBM15, BCLAF1 and THRAP3. Interacts with NUDT21 and CPSF6.

Its subcellular location is the nucleus speckle. The protein localises to the nucleus. The protein resides in the nucleoplasm. It localises to the cytoplasm. Its function is as follows. Associated component of the WMM complex, a complex that mediates N6-methyladenosine (m6A) methylation of RNAs, a modification that plays a role in the efficiency of mRNA splicing and RNA processing. Acts as a key regulator of m6A methylation by promoting m6A methylation of mRNAs in the 3'-UTR near the stop codon: recruits the catalytic core components METTL3 and METTL14, thereby guiding m6A methylation at specific sites. Required for mRNA polyadenylation via its role in selective m6A methylation: m6A methylation of mRNAs in the 3'-UTR near the stop codon correlating with alternative polyadenylation (APA). This chain is Protein virilizer homolog, found in Homo sapiens (Human).